Reading from the N-terminus, the 277-residue chain is Large ribosomal subunit protein uL2 (277 aa).

The interval 222–258 is disordered; that stretch reads GSVMNPCDHPHGGGEGRSPIGRPSPVTPWGKPALGYK.

It belongs to the universal ribosomal protein uL2 family. Part of the 50S ribosomal subunit. Forms a bridge to the 30S subunit in the 70S ribosome.

One of the primary rRNA binding proteins. Required for association of the 30S and 50S subunits to form the 70S ribosome, for tRNA binding and peptide bond formation. It has been suggested to have peptidyltransferase activity; this is somewhat controversial. Makes several contacts with the 16S rRNA in the 70S ribosome. This Clostridium perfringens (strain 13 / Type A) protein is Large ribosomal subunit protein uL2.